A 423-amino-acid chain; its full sequence is AP-1 complex subunit mu-2 (423 aa).

The MHD domain maps to 168 to 421 (KNEVFIDVIE…ITQSGDYQLR (254 aa)).

Belongs to the adaptor complexes medium subunit family. In terms of assembly, adaptor protein complex 1 (AP-1) is a heterotetramer composed of two large adaptins (gamma-type subunit AP1G1 and beta-type subunit AP1B1), a medium adaptin (mu-type subunit AP1M1 or AP1M2) and a small adaptin (sigma-type subunit AP1S1 or AP1S2 or AP1S3). Interacts with P2X4. Phosphorylation of membrane-bound AP1M1/AP1M2 increases its affinity for sorting signals.

The protein resides in the golgi apparatus. It localises to the cytoplasmic vesicle. The protein localises to the clathrin-coated vesicle membrane. Subunit of clathrin-associated adaptor protein complex 1 that plays a role in protein sorting in the trans-Golgi network (TGN) and endosomes. The AP complexes mediate the recruitment of clathrin to membranes and the recognition of sorting signals within the cytosolic tails of transmembrane cargo molecules. The sequence is that of AP-1 complex subunit mu-2 (AP1M2) from Homo sapiens (Human).